The sequence spans 154 residues: UPF0225 protein YpsIP31758_1970 (154 aa).

This sequence belongs to the UPF0225 family.

In Yersinia pseudotuberculosis serotype O:1b (strain IP 31758), this protein is UPF0225 protein YpsIP31758_1970.